The sequence spans 428 residues: MTVQTSPPSAALAETMLDMGRRARAASRELGLLTAQDRTRGLKAIAAAIRAAAPDVLRANAEDMAAARAKGLAPAMLDRLALDEKRLEGVAAGVETVAALPDPLGRELARWTPPNGLDIARIAVPLGVIGIIYESRPNVTVDAGVLCLRSGNAAILRGGSESAKSSAALANAMRGALKSEELPVDAIQLVATTNREAVGHMLGGLEGALDVIVPRGGRSLVERVQAEARVPVIGHLEGLCHTYVHAAADPKKAVDIVLNAKMRRTGVCGSTETLLIDVAVAATLLPQIAKALTDAGCELRGDGRTRAILGDITPATEADWATEYLDAILSIAVVDGLPGALAHLARWSSGHTDAIITEDTAAAETFIANVDSAIVLHNASTQFADGGEFGFGAEIGIATGRIHARGPVGAEQLTTYKYAVRGTGQVRP.

It belongs to the gamma-glutamyl phosphate reductase family.

It localises to the cytoplasm. It carries out the reaction L-glutamate 5-semialdehyde + phosphate + NADP(+) = L-glutamyl 5-phosphate + NADPH + H(+). The protein operates within amino-acid biosynthesis; L-proline biosynthesis; L-glutamate 5-semialdehyde from L-glutamate: step 2/2. Functionally, catalyzes the NADPH-dependent reduction of L-glutamate 5-phosphate into L-glutamate 5-semialdehyde and phosphate. The product spontaneously undergoes cyclization to form 1-pyrroline-5-carboxylate. This is Gamma-glutamyl phosphate reductase from Hyphomonas neptunium (strain ATCC 15444).